The following is a 150-amino-acid chain: Urease accessory protein UreE (150 aa).

It belongs to the UreE family.

The protein resides in the cytoplasm. Functionally, involved in urease metallocenter assembly. Binds nickel. Probably functions as a nickel donor during metallocenter assembly. This chain is Urease accessory protein UreE, found in Streptococcus vestibularis.